The chain runs to 318 residues: Mitochondrial thiamine pyrophosphate carrier (318 aa).

3 Solcar repeats span residues 13–106 (NSKL…LTEL), 116–202 (HQFS…LKRA), and 214–309 (TGNL…FCNL). The next 6 helical transmembrane spans lie at 19-39 (AVAGSVSGFVTRALISPLDVI), 87-107 (ILSIGYGAVQFLAFEELTELL), 122-142 (FVCGGLSAGTATLTVHPVDVL), 173-193 (VFYKGLTPTVIAIFPYAGLQF), 220-240 (LLCGCGSGVISKTLTYPLDLF), and 293-313 (ALSTGFMFFWYELFCNLFHCI).

The protein belongs to the mitochondrial carrier (TC 2.A.29) family.

Its subcellular location is the mitochondrion membrane. The enzyme catalyses thiamine phosphate(out) + thiamine diphosphate(in) = thiamine phosphate(in) + thiamine diphosphate(out). Mitochondrial transporter mediating uptake of thiamine diphosphate into mitochondria. It is not clear if the antiporter activity is affected by the membrane potential or by the proton electrochemical gradient. The chain is Mitochondrial thiamine pyrophosphate carrier (Slc25a19) from Rattus norvegicus (Rat).